Here is a 538-residue protein sequence, read N- to C-terminus: Atos homolog protein B (538 aa).

The span at 1–18 (MRHVQAEPSPSSEPEAGP) shows a compositional bias: low complexity. 4 disordered regions span residues 1 to 103 (MRHV…GLLG), 153 to 185 (NTLH…QLHT), 197 to 300 (GGKS…VLDP), and 323 to 342 (SLRK…VPTP). Over residues 227–238 (HTPPGPGPPGPC) the composition is skewed to pro residues. 2 positions are modified to phosphoserine: serine 254 and serine 255. Low complexity predominate over residues 323 to 334 (SLRKGPGLLSPP). Residues 348–430 (LLGSFEESLL…VPKVGTIQVT (83 aa)) are required for macropage invasion. The tract at residues 436–444 (QTVVKMFLV) is transactivation domain 1 (TAD1).

It belongs to the ATOS family.

It localises to the nucleus. Transcription regulator that may syncronize transcriptional and translational programs. The polypeptide is Atos homolog protein B (Pongo abelii (Sumatran orangutan)).